The primary structure comprises 97 residues: Citrate lyase acyl carrier protein 2 (97 aa).

Position 14 is an O-(phosphoribosyl dephospho-coenzyme A)serine (Ser-14).

Belongs to the CitD family. As to quaternary structure, oligomer with a subunit composition of (alpha,beta,gamma)6.

The protein resides in the cytoplasm. Its function is as follows. Covalent carrier of the coenzyme of citrate lyase. The sequence is that of Citrate lyase acyl carrier protein 2 from Salmonella paratyphi A (strain ATCC 9150 / SARB42).